A 444-amino-acid polypeptide reads, in one-letter code: 23S rRNA (uracil(1939)-C(5))-methyltransferase RlmD (444 aa).

Positions 5-67 (RSRIDRTPFQ…RHFDEARTVE (63 aa)) constitute a TRAM domain. The [4Fe-4S] cluster site is built by C80, C86, C89, and C168. S-adenosyl-L-methionine contacts are provided by Q276, F305, N310, E326, D353, and D374. C400 serves as the catalytic Nucleophile.

Belongs to the class I-like SAM-binding methyltransferase superfamily. RNA M5U methyltransferase family. RlmD subfamily.

It catalyses the reaction uridine(1939) in 23S rRNA + S-adenosyl-L-methionine = 5-methyluridine(1939) in 23S rRNA + S-adenosyl-L-homocysteine + H(+). Its function is as follows. Catalyzes the formation of 5-methyl-uridine at position 1939 (m5U1939) in 23S rRNA. This chain is 23S rRNA (uracil(1939)-C(5))-methyltransferase RlmD, found in Stenotrophomonas maltophilia (strain K279a).